The primary structure comprises 448 residues: Tumor necrosis factor receptor superfamily member EDAR (448 aa).

The first 26 residues, 1–26 (MAHVGDCKWMSWLPVLVVSLMCSAKA), serve as a signal peptide directing secretion. Residues 27–187 (EDSNCGENEY…LSGQGHLATA (161 aa)) are Extracellular-facing. TNFR-Cys repeat units follow at residues 30 to 71 (NCGE…DYGC), 73 to 113 (PCPA…DAEC), and 115 to 150 (PCLP…ECVG). 6 cysteine pairs are disulfide-bonded: Cys31-Cys44, Cys47-Cys60, Cys50-Cys71, Cys74-Cys87, Cys93-Cys113, and Cys135-Cys148. Asn38 carries an N-linked (GlcNAc...) asparagine glycan. Residues 188 to 208 (LIIAMSTIFIMAIAIVLIIMF) form a helical membrane-spanning segment. At 209–448 (YIMKTKPSAP…PPASPPPAAS (240 aa)) the chain is on the cytoplasmic side. The segment covering 220-229 (CCSSPPGKSA) has biased composition (low complexity). The interval 220–297 (CCSSPPGKSA…EEPAPDKQGS (78 aa)) is disordered. Residues 258-283 (LTATPTKTPKSENDASSENEQLLSRS) show a composition bias toward polar residues. The 74-residue stretch at 358-431 (RMLSSTYNSE…DAVESLCADI (74 aa)) folds into the Death domain.

Binds to EDARADD. Associates with TRAF1, TRAF2, TRAF3 and NIK.

It is found in the membrane. Its function is as follows. Receptor for EDA isoform TAA, but not for EDA isoform TA-2. May mediate the activation of NF-kappa-B and JNK. May promote caspase-independent cell death. This is Tumor necrosis factor receptor superfamily member EDAR (Edar) from Mus musculus (Mouse).